The primary structure comprises 276 residues: Large ribosomal subunit protein uL2 (276 aa).

Positions 224–276 are disordered; sequence VMNPVDHPHGGGEGKAPIGRKSPMTPWGKPTLGYKTRKKKNKSDKFIIRRRKK. The segment covering 258–276 has biased composition (basic residues); it reads KTRKKKNKSDKFIIRRRKK.

It belongs to the universal ribosomal protein uL2 family. As to quaternary structure, part of the 50S ribosomal subunit. Forms a bridge to the 30S subunit in the 70S ribosome.

In terms of biological role, one of the primary rRNA binding proteins. Required for association of the 30S and 50S subunits to form the 70S ribosome, for tRNA binding and peptide bond formation. It has been suggested to have peptidyltransferase activity; this is somewhat controversial. Makes several contacts with the 16S rRNA in the 70S ribosome. The protein is Large ribosomal subunit protein uL2 of Geobacillus stearothermophilus (Bacillus stearothermophilus).